Reading from the N-terminus, the 148-residue chain is uncharacterized protein (148 aa).

The helical transmembrane segment at 1 to 21 (MLQNYAIVLGMAVAVAIWYFF) threads the bilayer. The interval 27–61 (APPGPNPPKPDPPKPDPPKMHMPKKKPHWMDPHLT) is disordered.

It localises to the host membrane. This is an uncharacterized protein from Frog virus 3 (isolate Goorha) (FV-3).